The following is a 227-amino-acid chain: Cytochrome c oxidase subunit 2 (227 aa).

Residues 1–14 are Mitochondrial intermembrane-facing; the sequence is MAYPFQLGLQDATS. A helical transmembrane segment spans residues 15-45; the sequence is PIMEELMNFHDHTLMIVFLISTLVLYIISLM. Topologically, residues 46-59 are mitochondrial matrix; sequence LTTKLTHTSTMDAQ. The chain crosses the membrane as a helical span at residues 60-87; it reads EVETVWTILPAVILIMIALPSLRILYMM. Topologically, residues 88 to 227 are mitochondrial intermembrane; the sequence is DEINNPVLTV…HFENWSTSMI (140 aa). Cu cation is bound by residues His-161, Cys-196, Glu-198, Cys-200, His-204, and Met-207. Glu-198 contacts Mg(2+).

This sequence belongs to the cytochrome c oxidase subunit 2 family. As to quaternary structure, component of the cytochrome c oxidase (complex IV, CIV), a multisubunit enzyme composed of 14 subunits. The complex is composed of a catalytic core of 3 subunits MT-CO1, MT-CO2 and MT-CO3, encoded in the mitochondrial DNA, and 11 supernumerary subunits COX4I, COX5A, COX5B, COX6A, COX6B, COX6C, COX7A, COX7B, COX7C, COX8 and NDUFA4, which are encoded in the nuclear genome. The complex exists as a monomer or a dimer and forms supercomplexes (SCs) in the inner mitochondrial membrane with NADH-ubiquinone oxidoreductase (complex I, CI) and ubiquinol-cytochrome c oxidoreductase (cytochrome b-c1 complex, complex III, CIII), resulting in different assemblies (supercomplex SCI(1)III(2)IV(1) and megacomplex MCI(2)III(2)IV(2)). Found in a complex with TMEM177, COA6, COX18, COX20, SCO1 and SCO2. Interacts with TMEM177 in a COX20-dependent manner. Interacts with COX20. Interacts with COX16. It depends on Cu cation as a cofactor.

It is found in the mitochondrion inner membrane. The catalysed reaction is 4 Fe(II)-[cytochrome c] + O2 + 8 H(+)(in) = 4 Fe(III)-[cytochrome c] + 2 H2O + 4 H(+)(out). Functionally, component of the cytochrome c oxidase, the last enzyme in the mitochondrial electron transport chain which drives oxidative phosphorylation. The respiratory chain contains 3 multisubunit complexes succinate dehydrogenase (complex II, CII), ubiquinol-cytochrome c oxidoreductase (cytochrome b-c1 complex, complex III, CIII) and cytochrome c oxidase (complex IV, CIV), that cooperate to transfer electrons derived from NADH and succinate to molecular oxygen, creating an electrochemical gradient over the inner membrane that drives transmembrane transport and the ATP synthase. Cytochrome c oxidase is the component of the respiratory chain that catalyzes the reduction of oxygen to water. Electrons originating from reduced cytochrome c in the intermembrane space (IMS) are transferred via the dinuclear copper A center (CU(A)) of subunit 2 and heme A of subunit 1 to the active site in subunit 1, a binuclear center (BNC) formed by heme A3 and copper B (CU(B)). The BNC reduces molecular oxygen to 2 water molecules using 4 electrons from cytochrome c in the IMS and 4 protons from the mitochondrial matrix. The chain is Cytochrome c oxidase subunit 2 (MT-CO2) from Apodemus semotus (Taiwan field mouse).